Here is a 341-residue protein sequence, read N- to C-terminus: uncharacterized protein (341 aa).

This is an uncharacterized protein from Treponema pallidum (strain Nichols).